The primary structure comprises 210 residues: Shikimate kinase (210 aa).

34–39 (GAGKSV) serves as a coordination point for ATP. Ser38 provides a ligand contact to Mg(2+). Substrate contacts are provided by Asp56, Arg80, and Gly102. ATP is bound at residue Arg140. Substrate is bound at residue Arg159.

This sequence belongs to the shikimate kinase family. As to quaternary structure, monomer. Mg(2+) serves as cofactor.

The protein localises to the cytoplasm. The catalysed reaction is shikimate + ATP = 3-phosphoshikimate + ADP + H(+). It functions in the pathway metabolic intermediate biosynthesis; chorismate biosynthesis; chorismate from D-erythrose 4-phosphate and phosphoenolpyruvate: step 5/7. Catalyzes the specific phosphorylation of the 3-hydroxyl group of shikimic acid using ATP as a cosubstrate. The chain is Shikimate kinase from Bartonella quintana (strain Toulouse) (Rochalimaea quintana).